The sequence spans 394 residues: Phosphoglycerate kinase (394 aa).

Substrate contacts are provided by residues 21–23, Arg-36, 59–62, Arg-118, and Arg-151; these read DFN and HLGR. The residue at position 183 (Ser-183) is a Phosphoserine. Lys-201 and Gly-292 together coordinate ATP. At Thr-299 the chain carries Phosphothreonine. Residues Glu-323 and 350-353 each bind ATP; that span reads GGDS.

This sequence belongs to the phosphoglycerate kinase family. Monomer.

Its subcellular location is the cytoplasm. It carries out the reaction (2R)-3-phosphoglycerate + ATP = (2R)-3-phospho-glyceroyl phosphate + ADP. Its pathway is carbohydrate degradation; glycolysis; pyruvate from D-glyceraldehyde 3-phosphate: step 2/5. This Priestia megaterium (strain DSM 319 / IMG 1521) (Bacillus megaterium) protein is Phosphoglycerate kinase (pgk).